We begin with the raw amino-acid sequence, 497 residues long: Guanosine-5'-triphosphate,3'-diphosphate pyrophosphatase (497 aa).

It belongs to the GppA/Ppx family. GppA subfamily.

The catalysed reaction is guanosine 3'-diphosphate 5'-triphosphate + H2O = guanosine 3',5'-bis(diphosphate) + phosphate + H(+). The protein operates within purine metabolism; ppGpp biosynthesis; ppGpp from GTP: step 2/2. Its function is as follows. Catalyzes the conversion of pppGpp to ppGpp. Guanosine pentaphosphate (pppGpp) is a cytoplasmic signaling molecule which together with ppGpp controls the 'stringent response', an adaptive process that allows bacteria to respond to amino acid starvation, resulting in the coordinated regulation of numerous cellular activities. This is Guanosine-5'-triphosphate,3'-diphosphate pyrophosphatase from Vibrio campbellii (strain ATCC BAA-1116).